Reading from the N-terminus, the 557-residue chain is Anti-Muellerian hormone type-2 receptor (557 aa).

The N-terminal stretch at 1–17 is a signal peptide; the sequence is MLGTLGLWTLLPAAAQV. At 18–144 the chain is on the extracellular side; the sequence is SPNRRTCVFF…QEPQATPGGP (127 aa). 2 disulfide bridges follow: Cys55-Cys79 and Cys92-Cys109. N-linked (GlcNAc...) asparagine glycosylation occurs at Asn66. N-linked (GlcNAc...) asparagine glycosylation is present at Asn119. Residues 145–165 traverse the membrane as a helical segment; that stretch reads IWMAQLLLGVFLVLLLSIIIL. Over 166 to 557 the chain is Cytoplasmic; sequence ALLQRKACRV…SVQQGSGSKS (392 aa). The Protein kinase domain occupies 201 to 511; it reads LRFSQVIQEG…RLAALAYPQV (311 aa). ATP contacts are provided by residues 207–215 and Lys228; that span reads IQEGGHAVV. Asp331 acts as the Proton acceptor in catalysis.

It belongs to the protein kinase superfamily. TKL Ser/Thr protein kinase family. TGFB receptor subfamily. In terms of assembly, interacts with type I receptor ACVR1. Requires Mg(2+) as cofactor. It depends on Mn(2+) as a cofactor.

Its subcellular location is the membrane. The catalysed reaction is L-threonyl-[receptor-protein] + ATP = O-phospho-L-threonyl-[receptor-protein] + ADP + H(+). It catalyses the reaction L-seryl-[receptor-protein] + ATP = O-phospho-L-seryl-[receptor-protein] + ADP + H(+). On ligand binding, forms a receptor complex consisting of two type II and two type I transmembrane serine/threonine kinases. Type II receptors phosphorylate and activate type I receptors which autophosphorylate, then bind and activate SMAD transcriptional regulators. Receptor for anti-Muellerian hormone. This is Anti-Muellerian hormone type-2 receptor (Amhr2) from Rattus norvegicus (Rat).